We begin with the raw amino-acid sequence, 260 residues long: UPF0246 protein Veis_4789 (260 aa).

Belongs to the UPF0246 family.

The polypeptide is UPF0246 protein Veis_4789 (Verminephrobacter eiseniae (strain EF01-2)).